Consider the following 734-residue polypeptide: Cytosolic endo-beta-N-acetylglucosaminidase (734 aa).

Position 1 is an N-acetylmethionine (methionine 1). The tract at residues 1-45 (METSSVLTRGAARQRSPAAPEKQARDQTERRPGRRRQGRRINEDQ) is disordered. The segment covering 22–31 (KQARDQTERR) has biased composition (basic and acidic residues). In terms of domain architecture, BRCT spans 281 to 375 (QNRVFFDSCD…DFFQNQDKFW (95 aa)).

Belongs to the glycosyl hydrolase 85 family.

It localises to the cytoplasm. It is found in the cytosol. The catalysed reaction is an N(4)-(oligosaccharide-(1-&gt;3)-[oligosaccharide-(1-&gt;6)]-beta-D-Man-(1-&gt;4)-beta-D-GlcNAc-(1-&gt;4)-alpha-D-GlcNAc)-L-asparaginyl-[protein] + H2O = an oligosaccharide-(1-&gt;3)-[oligosaccharide-(1-&gt;6)]-beta-D-Man-(1-&gt;4)-D-GlcNAc + N(4)-(N-acetyl-beta-D-glucosaminyl)-L-asparaginyl-[protein]. Endoglycosidase that releases N-glycans from glycoproteins by cleaving the beta-1,4-glycosidic bond in the N,N'-diacetylchitobiose core. Involved in the processing of free oligosaccharides in the cytosol. The protein is Cytosolic endo-beta-N-acetylglucosaminidase (Engase) of Mus musculus (Mouse).